We begin with the raw amino-acid sequence, 91 residues long: Small ribosomal subunit protein uS19 (91 aa).

It belongs to the universal ribosomal protein uS19 family.

Its function is as follows. Protein S19 forms a complex with S13 that binds strongly to the 16S ribosomal RNA. The chain is Small ribosomal subunit protein uS19 from Synechococcus sp. (strain CC9902).